The following is a 430-amino-acid chain: Ribosomal protein uS12 methylthiotransferase RimO (430 aa).

An MTTase N-terminal domain is found at 1-116 (MRVGIKVLGC…IANALEKGTD (116 aa)). Residues Cys-10, Cys-46, Cys-79, Cys-148, Cys-152, and Cys-155 each coordinate [4Fe-4S] cluster. Residues 134-365 (LEERPYAYVK…LLQAEISNSR (232 aa)) form the Radical SAM core domain. Residues 367 to 430 (DRFIGRKLKF…DEYDMWGSVT (64 aa)) form the TRAM domain.

It belongs to the methylthiotransferase family. RimO subfamily. [4Fe-4S] cluster is required as a cofactor.

The protein localises to the cytoplasm. The catalysed reaction is L-aspartate(89)-[ribosomal protein uS12]-hydrogen + (sulfur carrier)-SH + AH2 + 2 S-adenosyl-L-methionine = 3-methylsulfanyl-L-aspartate(89)-[ribosomal protein uS12]-hydrogen + (sulfur carrier)-H + 5'-deoxyadenosine + L-methionine + A + S-adenosyl-L-homocysteine + 2 H(+). Functionally, catalyzes the methylthiolation of an aspartic acid residue of ribosomal protein uS12. This is Ribosomal protein uS12 methylthiotransferase RimO from Thermotoga sp. (strain RQ2).